The primary structure comprises 260 residues: NSALWPVAGEAEVPFISCSASEFVELYVGMGASRVRDLFARAKKEAPSIIFIDEIDAVAKSRDGRFRIVSNDEREQTLNQLLTEMDGFDSNSAVIVLGATNRADVLDPALRRPGRFDRVVMVETPDRVGRQAILNVHVSKKELPLGDDVDLASIASMTTGFTGADLANLVNEAALLAGRQNKVVVEKIDFIHAVERSIAGIEKKTAKLQGSEKAVVARHEAGHAVVGTAVSKLLAGQPRVEKLSILPRSGRALGFTYTPS.

A Zn(2+)-binding site is contributed by His-219. Glu-220 is a catalytic residue. Position 223 (His-223) interacts with Zn(2+).

The protein in the N-terminal section; belongs to the AAA ATPase family. This sequence in the C-terminal section; belongs to the peptidase M41 family. Requires Zn(2+) as cofactor.

The protein localises to the plastid. Its subcellular location is the chloroplast thylakoid membrane. Probable ATP-dependent zinc metallopeptidase. The sequence is that of ATP-dependent zinc metalloprotease FTSH, chloroplastic from Helianthus annuus (Common sunflower).